A 231-amino-acid polypeptide reads, in one-letter code: NADH-ubiquinone oxidoreductase chain 4 (231 aa).

7 helical membrane-spanning segments follow: residues 1-21 (PIAGSMVLAAILLKLGGYGII), 34-54 (LFIPFIVLALWGATLANLTCL), 61-80 (SLIAYSSISHMGLVVAAVII), 84-106 (WGLSGAMALMIAHGFTSSALFCL), 118-138 (ILILTRGFHNILPMATTWWLL), 156-176 (LLIVSTLFNWCPTTIIMLGLS), and 211-231 (LLMILHIIPLLMISMKPELVI).

It belongs to the complex I subunit 4 family.

It localises to the mitochondrion membrane. It carries out the reaction a ubiquinone + NADH + 5 H(+)(in) = a ubiquinol + NAD(+) + 4 H(+)(out). Its function is as follows. Core subunit of the mitochondrial membrane respiratory chain NADH dehydrogenase (Complex I) that is believed to belong to the minimal assembly required for catalysis. Complex I functions in the transfer of electrons from NADH to the respiratory chain. The immediate electron acceptor for the enzyme is believed to be ubiquinone. The protein is NADH-ubiquinone oxidoreductase chain 4 (MT-ND4) of Hypnale hypnale (Merrem's hump-nosed viper).